The sequence spans 185 residues: Ribosome-recycling factor (185 aa).

It belongs to the RRF family.

It localises to the cytoplasm. Functionally, responsible for the release of ribosomes from messenger RNA at the termination of protein biosynthesis. May increase the efficiency of translation by recycling ribosomes from one round of translation to another. This Shewanella frigidimarina (strain NCIMB 400) protein is Ribosome-recycling factor.